The chain runs to 250 residues: NAD-dependent protein deacylase 1 (250 aa).

The region spanning 1–250 (MRAVVELLAG…PELLRRAFPG (250 aa)) is the Deacetylase sirtuin-type domain. An NAD(+)-binding site is contributed by 19–39 (GAGVSAESGIPTFRDALGGLW). Substrate-binding residues include tyrosine 64 and arginine 67. An NAD(+)-binding site is contributed by 98–101 (QNVD). Histidine 116 functions as the Proton acceptor in the catalytic mechanism. Residues cysteine 124, cysteine 127, cysteine 152, and cysteine 155 each contribute to the Zn(2+) site. NAD(+) is bound by residues 192 to 194 (GTS), 218 to 220 (NPQ), and alanine 236.

Belongs to the sirtuin family. Class III subfamily. It depends on Zn(2+) as a cofactor.

It is found in the cytoplasm. It catalyses the reaction N(6)-acetyl-L-lysyl-[protein] + NAD(+) + H2O = 2''-O-acetyl-ADP-D-ribose + nicotinamide + L-lysyl-[protein]. The catalysed reaction is N(6)-succinyl-L-lysyl-[protein] + NAD(+) + H2O = 2''-O-succinyl-ADP-D-ribose + nicotinamide + L-lysyl-[protein]. Its function is as follows. NAD-dependent lysine deacetylase and desuccinylase that specifically removes acetyl and succinyl groups on target proteins. Modulates the activities of several proteins which are inactive in their acylated form. The polypeptide is NAD-dependent protein deacylase 1 (Pseudomonas aeruginosa (strain ATCC 15692 / DSM 22644 / CIP 104116 / JCM 14847 / LMG 12228 / 1C / PRS 101 / PAO1)).